The sequence spans 232 residues: Small ribosomal subunit protein uS3 (232 aa).

In terms of domain architecture, KH type-2 spans 39–107 (IRKFLKTKLY…DIAINIKEER (69 aa)). Positions 213-222 (QADKNEDTSP) are enriched in basic and acidic residues. The disordered stretch occupies residues 213-232 (QADKNEDTSPKKPRRARRGK). Positions 223-232 (KKPRRARRGK) are enriched in basic residues.

It belongs to the universal ribosomal protein uS3 family. As to quaternary structure, part of the 30S ribosomal subunit. Forms a tight complex with proteins S10 and S14.

Its function is as follows. Binds the lower part of the 30S subunit head. Binds mRNA in the 70S ribosome, positioning it for translation. The sequence is that of Small ribosomal subunit protein uS3 from Campylobacter fetus subsp. fetus (strain 82-40).